The following is a 401-amino-acid chain: Exodeoxyribonuclease 7 large subunit (401 aa).

It belongs to the XseA family. As to quaternary structure, heterooligomer composed of large and small subunits.

It localises to the cytoplasm. It carries out the reaction Exonucleolytic cleavage in either 5'- to 3'- or 3'- to 5'-direction to yield nucleoside 5'-phosphates.. Its function is as follows. Bidirectionally degrades single-stranded DNA into large acid-insoluble oligonucleotides, which are then degraded further into small acid-soluble oligonucleotides. The polypeptide is Exodeoxyribonuclease 7 large subunit (Clostridium botulinum (strain Loch Maree / Type A3)).